The primary structure comprises 122 residues: Small ribosomal subunit protein uS13 (122 aa).

The disordered stretch occupies residues 99 to 122 (RGQRTHTNARTRKGPAKAIAGKKK).

Belongs to the universal ribosomal protein uS13 family. In terms of assembly, part of the 30S ribosomal subunit. Forms a loose heterodimer with protein S19. Forms two bridges to the 50S subunit in the 70S ribosome.

Functionally, located at the top of the head of the 30S subunit, it contacts several helices of the 16S rRNA. In the 70S ribosome it contacts the 23S rRNA (bridge B1a) and protein L5 of the 50S subunit (bridge B1b), connecting the 2 subunits; these bridges are implicated in subunit movement. Contacts the tRNAs in the A and P-sites. This is Small ribosomal subunit protein uS13 from Allorhizobium ampelinum (strain ATCC BAA-846 / DSM 112012 / S4) (Agrobacterium vitis (strain S4)).